The chain runs to 218 residues: Small ribosomal subunit protein uS3c (218 aa).

Residues valine 47 to alanine 118 enclose the KH type-2 domain.

It belongs to the universal ribosomal protein uS3 family. Part of the 30S ribosomal subunit.

The protein resides in the plastid. It is found in the chloroplast. In Solanum lycopersicum (Tomato), this protein is Small ribosomal subunit protein uS3c (rps3).